Reading from the N-terminus, the 359-residue chain is Peptide chain release factor 1 (359 aa).

Position 235 is an N5-methylglutamine (Gln235). The interval 287 to 312 (AQEASAMRSAQVGSGDRSERIRTYNF) is disordered.

This sequence belongs to the prokaryotic/mitochondrial release factor family. In terms of processing, methylated by PrmC. Methylation increases the termination efficiency of RF1.

It is found in the cytoplasm. Functionally, peptide chain release factor 1 directs the termination of translation in response to the peptide chain termination codons UAG and UAA. This is Peptide chain release factor 1 from Chlamydia trachomatis serovar L2 (strain ATCC VR-902B / DSM 19102 / 434/Bu).